Reading from the N-terminus, the 153-residue chain is ORM1-like protein 1 (153 aa).

Residues Met1–Tyr26 are Cytoplasmic-facing. A run of 2 helical transmembrane segments spans residues Ala27–Pro46 and Val47–Leu64. The Cytoplasmic portion of the chain corresponds to His65–Lys100. The helical transmembrane segment at Phe101–Pro121 threads the bilayer. The Extracellular portion of the chain corresponds to Thr122–His123. A helical membrane pass occupies residues Phe124–Pro140. Residues Gln141 to Tyr153 are Cytoplasmic-facing.

The protein belongs to the ORM family. In terms of assembly, ceramide-sensitive subunit of the serine palmitoyltransferase (SPT) complex, which is also composed of SPTLC1, SPTLC2/3 and SPTSSA/B. As to expression, widely expressed. Expressed in adult and fetal heart, brain, lung, liver, skeletal muscle and kidney. Expressed in adult pancreas and placenta and in fetal spleen abd thymus. Expressed at intermediate level in pancreas, placenta and brain but low in skeletal muscle and lung.

The protein resides in the endoplasmic reticulum membrane. In terms of biological role, plays an essential role in the homeostatic regulation of sphingolipid de novo biosynthesis by modulating the activity of the serine palmitoyltransferase (SPT) in response to ceramide levels. When complexed to SPT, the binding of ceramides to its N-terminus stabilizes a conformation that block SPT substrate entry, hence preventing SPT catalytic activity. Through this mechanism, maintains ceramide levels at sufficient concentrations for the production of complex sphingolipids, but which prevents the accumulation of ceramides to levels that trigger apoptosis. This chain is ORM1-like protein 1 (ORMDL1), found in Homo sapiens (Human).